The primary structure comprises 331 residues: ADP-L-glycero-D-manno-heptose-6-epimerase (331 aa).

NADP(+) is bound by residues 11–12 (FI), 32–33 (DN), K39, K54, 75–79 (EGACS), and N92. The Proton acceptor role is filled by Y139. K143 contacts NADP(+). N168 is a substrate binding site. Positions 169 and 177 each coordinate NADP(+). K177 (proton acceptor) is an active-site residue. Residues R179, H186, 200–203 (FGEY), R213, and Y292 contribute to the substrate site.

This sequence belongs to the NAD(P)-dependent epimerase/dehydratase family. HldD subfamily. In terms of assembly, homopentamer. Requires NADP(+) as cofactor.

The enzyme catalyses ADP-D-glycero-beta-D-manno-heptose = ADP-L-glycero-beta-D-manno-heptose. The protein operates within nucleotide-sugar biosynthesis; ADP-L-glycero-beta-D-manno-heptose biosynthesis; ADP-L-glycero-beta-D-manno-heptose from D-glycero-beta-D-manno-heptose 7-phosphate: step 4/4. Catalyzes the interconversion between ADP-D-glycero-beta-D-manno-heptose and ADP-L-glycero-beta-D-manno-heptose via an epimerization at carbon 6 of the heptose. The protein is ADP-L-glycero-D-manno-heptose-6-epimerase of Cupriavidus taiwanensis (strain DSM 17343 / BCRC 17206 / CCUG 44338 / CIP 107171 / LMG 19424 / R1) (Ralstonia taiwanensis (strain LMG 19424)).